A 518-amino-acid polypeptide reads, in one-letter code: Probable carboxypeptidase 2 (518 aa).

Residues Met1 to Ala21 form the signal peptide. Asn46 is a glycosylation site (N-linked (GlcNAc...) asparagine). The interval Pro53 to Glu76 is disordered. Positions Gly71 to Ala351 constitute a Peptidase M14 domain. The N-linked (GlcNAc...) asparagine glycan is linked to Asn116. The Zn(2+) site is built by His136, Glu139, and His224. Glu322 functions as the Proton donor/acceptor in the catalytic mechanism. N-linked (GlcNAc...) asparagine glycans are attached at residues Asn393 and Asn459.

The protein belongs to the peptidase M14 family. The cofactor is Zn(2+).

It localises to the secreted. Extracellular metalloprotease that contributes to pathogenicity. This chain is Probable carboxypeptidase 2 (MCPB), found in Trichophyton verrucosum (strain HKI 0517).